The sequence spans 479 residues: Serralysin C (479 aa).

Positions 1-17 (MGKNLSLRQDDAQHALS) are excised as a propeptide. Position 188 (histidine 188) interacts with Zn(2+). The active site involves glutamate 189. The Zn(2+) site is built by histidine 192 and tyrosine 228. 31 residues coordinate Ca(2+): arginine 265, glycine 267, aspartate 297, glycine 299, glycine 300, aspartate 302, threonine 339, glutamate 341, glycine 346, glycine 348, aspartate 350, asparagine 355, alanine 357, asparagine 359, glycine 363, glycine 364, alanine 365, glycine 366, aspartate 368, glycine 372, glycine 373, glycine 375, aspartate 377, glycine 381, glycine 382, alanine 383, glycine 384, aspartate 386, aspartate 395, aspartate 402, and aspartate 412. Hemolysin-type calcium-binding repeat units follow at residues 344 to 361 (IGGSGNDILVGNSADNIL), 362 to 379 (QGGAGNDVLYGGAGADTL), and 380 to 397 (YGGAGRDTFVYGSGQDST).

The protein belongs to the peptidase M10B family. Ca(2+) serves as cofactor. The cofactor is Zn(2+).

Its subcellular location is the secreted. The catalysed reaction is Preferential cleavage of bonds with hydrophobic residues in P1'.. The polypeptide is Serralysin C (prtC) (Dickeya chrysanthemi (Pectobacterium chrysanthemi)).